Reading from the N-terminus, the 385-residue chain is 1-deoxy-D-xylulose 5-phosphate reductoisomerase (385 aa).

Residues Thr10, Gly11, Ser12, Ile13, Lys37, and Asn124 each contribute to the NADPH site. Lys125 is a binding site for 1-deoxy-D-xylulose 5-phosphate. Glu126 provides a ligand contact to NADPH. Asp150 contributes to the Mn(2+) binding site. 1-deoxy-D-xylulose 5-phosphate contacts are provided by Ser151, Glu152, Ser176, and His199. Glu152 contributes to the Mn(2+) binding site. Residue Gly205 coordinates NADPH. 1-deoxy-D-xylulose 5-phosphate contacts are provided by Ser212, Asn217, Lys218, and Glu221. Residue Glu221 participates in Mn(2+) binding.

This sequence belongs to the DXR family. Mg(2+) serves as cofactor. Requires Mn(2+) as cofactor.

It catalyses the reaction 2-C-methyl-D-erythritol 4-phosphate + NADP(+) = 1-deoxy-D-xylulose 5-phosphate + NADPH + H(+). The protein operates within isoprenoid biosynthesis; isopentenyl diphosphate biosynthesis via DXP pathway; isopentenyl diphosphate from 1-deoxy-D-xylulose 5-phosphate: step 1/6. Catalyzes the NADPH-dependent rearrangement and reduction of 1-deoxy-D-xylulose-5-phosphate (DXP) to 2-C-methyl-D-erythritol 4-phosphate (MEP). The polypeptide is 1-deoxy-D-xylulose 5-phosphate reductoisomerase (Clostridium botulinum (strain 657 / Type Ba4)).